We begin with the raw amino-acid sequence, 283 residues long: DegV domain-containing protein CPE0304 (283 aa).

The DegV domain occupies 3 to 281; sequence VKVITDSTSC…VKSVGIAYAR (279 aa). Hexadecanoate contacts are provided by Ser60 and Ser92.

In terms of biological role, may bind long-chain fatty acids, such as palmitate, and may play a role in lipid transport or fatty acid metabolism. This chain is DegV domain-containing protein CPE0304, found in Clostridium perfringens (strain 13 / Type A).